Reading from the N-terminus, the 441-residue chain is Probable magnesium transporter NIPA8 (441 aa).

Residues 1-4 (MGEW) are Extracellular-facing. The chain crosses the membrane as a helical span at residues 5–25 (VIGAFINIFGSVAINFGTNLL). At 26–56 (KLGHNERERLALQDGGGKMPLKPIIHNQTWR) the chain is on the cytoplasmic side. Residues 57–77 (VGILVFLLGNCLNFISFGYAA) form a helical membrane-spanning segment. Topologically, residues 78-79 (QS) are extracellular. A helical membrane pass occupies residues 80-100 (LLAALGSIQFVSNIAFAYVVL). The Cytoplasmic portion of the chain corresponds to 101-105 (NKMVT). The helical transmembrane segment at 106–126 (VKVLVATAFIVLGNVFLVAFG) threads the bilayer. Residues 127–144 (NHQSPVFTPEQLAEKYSN) lie on the Extracellular side of the membrane. The chain crosses the membrane as a helical span at residues 145-165 (VTFLVYCGILILIVAVHHFLY). The Cytoplasmic portion of the chain corresponds to 166 to 184 (RKGEVLISTPGQEISSYWK). A helical membrane pass occupies residues 185 to 205 (MLLPFSYAVVSGAIGSCSVLF). Topologically, residues 206 to 222 (AKSLSNLLRLAMSSSYQ) are extracellular. A helical transmembrane segment spans residues 223-243 (LHSWFTYSMLLLFLSTAGFWM). Residues 244–255 (TRLNEGLSLYDA) are Cytoplasmic-facing. A helical transmembrane segment spans residues 256–276 (ILIVPMFQIAWTFFSICTGCI). At 277–288 (YFQEFQVFDALR) the chain is on the extracellular side. The helical transmembrane segment at 289–309 (TTMFILGMMCVFIGISLLAPD) threads the bilayer. The Cytoplasmic portion of the chain corresponds to 310–441 (DTRGNETKDN…MLEKTISSKA (132 aa)). Residues 313 to 347 (GNETKDNSSSLDSIVSSSVPTEEDRLIPQSSEDGH) are disordered. The segment covering 320–330 (SSSLDSIVSSS) has biased composition (low complexity). Residues 334–347 (EEDRLIPQSSEDGH) are compositionally biased toward basic and acidic residues.

Belongs to the NIPA (TC 2.A.7) family. Homodimer.

Its subcellular location is the cell membrane. It is found in the early endosome. Functionally, acts as a Mg(2+) transporter. Can also transport other divalent cations such as Fe(2+), Sr(2+), Ba(2+), Mn(2+) and Co(2+) but to a much less extent than Mg(2+). The chain is Probable magnesium transporter NIPA8 from Arabidopsis thaliana (Mouse-ear cress).